Reading from the N-terminus, the 627-residue chain is uncharacterized protein (627 aa).

The Extracellular segment spans residues M1–L32. Residues L33 to V53 form a helical membrane-spanning segment. Residues Y54–G66 lie on the Cytoplasmic side of the membrane. The chain crosses the membrane as a helical span at residues I67–G87. Residues A88–M113 lie on the Extracellular side of the membrane. Residues I114–F134 traverse the membrane as a helical segment. Over G135–T165 the chain is Cytoplasmic. Residues F166 to A186 traverse the membrane as a helical segment. Residues K187–K192 lie on the Extracellular side of the membrane. The chain crosses the membrane as a helical span at residues F193–G213. The Cytoplasmic portion of the chain corresponds to D214–S218. The chain crosses the membrane as a helical span at residues F219–I239. The Extracellular segment spans residues P240–N245. A helical transmembrane segment spans residues I246–E266. Topologically, residues R267 to L627 are cytoplasmic. The residue at position 305 (T305) is a Phosphothreonine. The tract at residues P512–D537 is disordered. The span at R517 to A533 shows a compositional bias: polar residues. S546 carries the phosphoserine modification. A Phosphothreonine modification is found at T588. The span at S605–E614 shows a compositional bias: basic and acidic residues. A disordered region spans residues S605 to L627.

Belongs to the FNT transporter (TC 1.A.16) family.

It localises to the membrane. This is an uncharacterized protein from Saccharomyces cerevisiae (strain ATCC 204508 / S288c) (Baker's yeast).